The primary structure comprises 218 residues: Ribose-5-phosphate isomerase A (218 aa).

Substrate contacts are provided by residues 28–31, 81–84, and 94–97; these read TGST, DGAD, and KGGG. Glu103 functions as the Proton acceptor in the catalytic mechanism. Lys121 contributes to the substrate binding site.

The protein belongs to the ribose 5-phosphate isomerase family. In terms of assembly, homodimer.

The enzyme catalyses aldehydo-D-ribose 5-phosphate = D-ribulose 5-phosphate. The protein operates within carbohydrate degradation; pentose phosphate pathway; D-ribose 5-phosphate from D-ribulose 5-phosphate (non-oxidative stage): step 1/1. In terms of biological role, catalyzes the reversible conversion of ribose-5-phosphate to ribulose 5-phosphate. The protein is Ribose-5-phosphate isomerase A of Methylococcus capsulatus (strain ATCC 33009 / NCIMB 11132 / Bath).